Here is a 170-residue protein sequence, read N- to C-terminus: MLLYLVNFQSMWANYVLELLKDAFAFKIKAKELDIPLAAYNPFRKQFSAQLLLDYVVERYKDGLVFAIIDEDIYDSNYNFVFGLAYPFRGAIVSTYRLKNFERIKKEVLHEMGHVFGLGHCNNYCVMRFSNSVFEVDEKPDKYCENCYREILNNGFYVNPKYVIFKENYN.

Residue His110 coordinates Zn(2+). Catalysis depends on Glu111, which acts as the Proton acceptor. Zn(2+) contacts are provided by His114, His120, Cys121, Cys125, Cys144, and Cys147.

Belongs to the peptidase M54 family. As to quaternary structure, monomer. Zn(2+) is required as a cofactor.

In terms of biological role, probable zinc metalloprotease whose natural substrate is unknown. This Nanoarchaeum equitans (strain Kin4-M) protein is Archaemetzincin.